Reading from the N-terminus, the 436-residue chain is MPMSSLPAAILSHMTAINNVPPPPLHSIPNLKKSKHINYGQLNALCHIRGQHSRSMSNILSAHDTFMKQYPKVFLHQKPRLPKLFKQEEQRELNEGKEESQHQQPDDSNNIAVHVQRAHGGHILYRPKRATEKFEEFLAILKKLPIHRTPYEHKTVWKFLKTIPDLTFQLNDKHLKTLSKTVFSETWLKGSTVVANDGFYVILKGLARPQTNVYKNLIEGSDSPDSFISQSFHSFIWSEEFKNSTLAEMYLPSYDSMLSKWSTFGTLEVMPQNESETQMFSVVTEDDCEILKIPAKGYAKIKEEKIKLENMQKLKLIRMCPYYEEWPTLSIYELIALLKWKKFPPGHVIVESGNIISFVGYINSGCCNIYRSIIGFVKLRSNKVKRSQKLVYMGKLKEKESFGEISVLLQVPFTCTIITKKEVEMAIIEDKDLFVA.

The segment covering 89–105 (EQRELNEGKEESQHQQP) has biased composition (basic and acidic residues). Positions 89–108 (EQRELNEGKEESQHQQPDDS) are disordered. 322 to 436 (YYEEWPTLSI…IIEDKDLFVA (115 aa)) contributes to the a nucleoside 3',5'-cyclic phosphate binding site.

This Homo sapiens (Human) protein is Cyclic nucleotide-binding domain-containing protein 1 (CNBD1).